The sequence spans 835 residues: Leucine--tRNA ligase (835 aa).

Positions 41–52 (PYPSGQGLHVGH) match the 'HIGH' region motif. Residues 611-615 (KMSKS) carry the 'KMSKS' region motif. Lysine 614 lines the ATP pocket.

It belongs to the class-I aminoacyl-tRNA synthetase family.

The protein resides in the cytoplasm. It catalyses the reaction tRNA(Leu) + L-leucine + ATP = L-leucyl-tRNA(Leu) + AMP + diphosphate. This is Leucine--tRNA ligase from Elusimicrobium minutum (strain Pei191).